The sequence spans 540 residues: Cobalt-factor III methyltransferase (540 aa).

Cys-402, Cys-405, Cys-439, and Cys-443 together coordinate [4Fe-4S] cluster.

The protein in the N-terminal section; belongs to the precorrin methyltransferase family. Requires [4Fe-4S] cluster as cofactor.

It carries out the reaction Co(II)-factor III + AH2 + S-adenosyl-L-methionine = Co-precorrin-4 + A + S-adenosyl-L-homocysteine. The protein operates within cofactor biosynthesis; adenosylcobalamin biosynthesis. Functionally, methyltransferase that catalyzes the reduction, ring contraction and methylation of C-17 in cobalt-factor III to form cobalt-precorrin-4. Is also able to convert cobalt-precorrin-3 to cobalt-precorrin-4. The sequence is that of Cobalt-factor III methyltransferase (cbiH60) from Priestia megaterium (Bacillus megaterium).